The sequence spans 1466 residues: ABC transporter C family member 6 (1466 aa).

10 helical membrane-spanning segments follow: residues 16–36 (SVLS…SWLF), 63–83 (LVLI…LLSC), 91–111 (WPFL…VYLF), 128–148 (VWWV…FVLY), 158–178 (FVIS…SCLW), 286–306 (IVLS…APYL), 322–339 (NQGY…LVEC), 400–420 (WFMH…WILY), 425–445 (LGSI…YPFA), and 512–532 (SVLW…CLLL). In terms of domain architecture, ABC transmembrane type-1 1 spans 286–567 (IVLSALLAFV…LPETISMIVQ (282 aa)). Residues 601-824 (VEISNGTFSW…GTDFMELVGA (224 aa)) enclose the ABC transporter 1 domain. An ATP-binding site is contributed by 636 to 643 (GTVGSGKS). The segment at 840-876 (ASEKSTTDKENEVLHHKEKQENGSDNKPSGQLVQEEE) is disordered. Residues 844–863 (STTDKENEVLHHKEKQENGS) show a composition bias toward basic and acidic residues. Helical transmembrane passes span 890 to 910 (YMAL…QVLF), 937 to 957 (GFTL…CILI), and 1026 to 1046 (ILGI…VFIP). An ABC transmembrane type-1 2 domain is found at 900–1182 (IPLILVVQVL…LIWTLCDLEN (283 aa)). One can recognise an ABC transporter 2 domain in the interval 1219-1453 (ITICNLQVRY…RSSLFSKLVA (235 aa)). 1253–1260 (GRTGCGKS) is a binding site for ATP.

Belongs to the ABC transporter superfamily. ABCC family. Conjugate transporter (TC 3.A.1.208) subfamily. As to expression, ubiquitous.

It localises to the membrane. It catalyses the reaction ATP + H2O + xenobioticSide 1 = ADP + phosphate + xenobioticSide 2.. Pump for glutathione S-conjugates. The chain is ABC transporter C family member 6 (ABCC6) from Arabidopsis thaliana (Mouse-ear cress).